A 128-amino-acid chain; its full sequence is Small ribosomal subunit protein uS11 (128 aa).

This sequence belongs to the universal ribosomal protein uS11 family. As to quaternary structure, part of the 30S ribosomal subunit. Interacts with proteins S7 and S18. Binds to IF-3.

Its function is as follows. Located on the platform of the 30S subunit, it bridges several disparate RNA helices of the 16S rRNA. Forms part of the Shine-Dalgarno cleft in the 70S ribosome. The sequence is that of Small ribosomal subunit protein uS11 from Desulfosudis oleivorans (strain DSM 6200 / JCM 39069 / Hxd3) (Desulfococcus oleovorans).